The sequence spans 132 residues: Fatty acid-binding protein, intestinal (132 aa).

Ala-2 carries the post-translational modification N-acetylalanine. Hexadecanoate is bound by residues Trp-83 and Arg-107. Trp-83 and Arg-107 together coordinate tetradecanoate.

This sequence belongs to the calycin superfamily. Fatty-acid binding protein (FABP) family. In terms of tissue distribution, expressed in the small intestine. Highest expression levels in the proximal ileum.

Its subcellular location is the cytoplasm. Functionally, FABPs are thought to play a role in the intracellular transport of long-chain fatty acids and their acyl-CoA esters. FABP2 is probably involved in triglyceride-rich lipoprotein synthesis. Binds saturated long-chain fatty acids with a high affinity, but binds with a lower affinity to unsaturated long-chain fatty acids. FABP2 may also help maintain energy homeostasis by functioning as a lipid sensor. The chain is Fatty acid-binding protein, intestinal (Fabp2) from Mus musculus (Mouse).